The sequence spans 283 residues: MESISLKAHAKINLSLDVIGKRQDGYHEVRMIMQSIALHDEVVIEKRAAGIKVECDKPWVPEGSGNIAYKAANLMMERYKIESGVGIKILKRIPVAAGLAGGSADAAAVIKGMNELFNLNADEAELMDIGKQVGADVPFCIKGGTMLSEGIGEKLTKIPSFEGVNIVLVKPKVGVSTAWVYSNLKLNEISSRPDTELLIKAIYEKNIGCLAQNMTNVLETVTIKKYGVINDIKNELLRLGALGSMMSGSGPSVFGIFENEKQACLAYEGLKNSEWECFVTQTI.

The active site involves Lys11. ATP is bound at residue 94–104 (PVAAGLAGGSA). Residue Asp136 is part of the active site.

Belongs to the GHMP kinase family. IspE subfamily.

It carries out the reaction 4-CDP-2-C-methyl-D-erythritol + ATP = 4-CDP-2-C-methyl-D-erythritol 2-phosphate + ADP + H(+). It participates in isoprenoid biosynthesis; isopentenyl diphosphate biosynthesis via DXP pathway; isopentenyl diphosphate from 1-deoxy-D-xylulose 5-phosphate: step 3/6. Functionally, catalyzes the phosphorylation of the position 2 hydroxy group of 4-diphosphocytidyl-2C-methyl-D-erythritol. The polypeptide is 4-diphosphocytidyl-2-C-methyl-D-erythritol kinase (Acetivibrio thermocellus (strain ATCC 27405 / DSM 1237 / JCM 9322 / NBRC 103400 / NCIMB 10682 / NRRL B-4536 / VPI 7372) (Clostridium thermocellum)).